Consider the following 785-residue polypeptide: Mitochondrial intermediate peptidase (785 aa).

The N-terminal 27 residues, 1–27 (MLKAVMPRPWVCSRCVKRQIQSSRGLA), are a transit peptide targeting the mitochondrion. Residues 26 to 52 (LATASTQYREPRPVPTDHSAPGAKHDD) are disordered. A Zn(2+)-binding site is contributed by His566. The active site involves Glu567. Residues His570 and His573 each coordinate Zn(2+).

The protein belongs to the peptidase M3 family. The cofactor is Zn(2+).

It localises to the mitochondrion matrix. The enzyme catalyses Release of an N-terminal octapeptide as second stage of processing of some proteins imported into the mitochondrion.. Its function is as follows. Cleaves proteins, imported into the mitochondrion, to their mature size. While most mitochondrial precursor proteins are processed to the mature form in one step by mitochondrial processing peptidase (MPP), the sequential cleavage by MIP of an octapeptide after initial processing by MPP is a required step for a subgroup of nuclear-encoded precursor proteins destined for the matrix or the inner membrane. In Sclerotinia sclerotiorum (strain ATCC 18683 / 1980 / Ss-1) (White mold), this protein is Mitochondrial intermediate peptidase (oct1).